A 470-amino-acid chain; its full sequence is Histidine--tRNA ligase (470 aa).

The interval 69–99 is disordered; it reads GIDPILPPNRQAEKDKSGETGKDKSGETGSE. The span at 79 to 94 shows a compositional bias: basic and acidic residues; the sequence is QAEKDKSGETGKDKSG.

Belongs to the class-II aminoacyl-tRNA synthetase family. In terms of assembly, homodimer.

Its subcellular location is the cytoplasm. The enzyme catalyses tRNA(His) + L-histidine + ATP = L-histidyl-tRNA(His) + AMP + diphosphate + H(+). The chain is Histidine--tRNA ligase from Nostoc punctiforme (strain ATCC 29133 / PCC 73102).